Consider the following 221-residue polypeptide: CDC5 pindle pole body anchor protein 1 (221 aa).

Positions 142 to 221 (KNIERDNLKP…PTEDSVPHAE (80 aa)) are disordered. 3 positions are modified to phosphoserine: S158, S170, and S175. A CDC5-binding motif is present at residues 165-170 (PLVTSS). The span at 166-188 (LVTSSPIHMSPLQSRQRPVSSLQ) shows a compositional bias: polar residues. Positions 189–195 (PPKGPNF) match the CLB3-docking motif. The CDC14-binding signature appears at 200 to 202 (PKL).

In terms of assembly, interacts with CDC5 and CDC14. Post-translationally, phosphorylated by CLB3-CDK1 in metaphase which is required for correct localization at the nuclear envelop and the spindle pole body, and dephosphorylated by CDC14 in early anaphase.

Its subcellular location is the nucleus membrane. The protein localises to the cytoplasm. It is found in the cytoskeleton. The protein resides in the microtubule organizing center. It localises to the spindle pole body. Functionally, specialized component of the nuclear membrane that may be involved in the connection of the spindle pole body (SPB) to the nuclear envelope. Recruits CDC5 to spindle pole bodies in metaphase. The chain is CDC5 pindle pole body anchor protein 1 from Saccharomyces cerevisiae (strain ATCC 204508 / S288c) (Baker's yeast).